The following is a 173-amino-acid chain: uncharacterized protein (173 aa).

The helical transmembrane segment at 1-21 threads the bilayer; that stretch reads MFIVFYLILIIFIFIYFHVYI.

It to T.pallidum TP0711.

It localises to the membrane. This is an uncharacterized protein from Borreliella burgdorferi (strain ATCC 35210 / DSM 4680 / CIP 102532 / B31) (Borrelia burgdorferi).